Here is a 1161-residue protein sequence, read N- to C-terminus: DNA-directed RNA polymerase subunit beta' (1161 aa).

Zn(2+)-binding residues include Cys-60, Cys-62, Cys-75, and Cys-78. Mg(2+) is bound by residues Asp-449, Asp-451, and Asp-453. Zn(2+) is bound by residues Cys-790, Cys-864, Cys-871, and Cys-874.

The protein belongs to the RNA polymerase beta' chain family. The RNAP catalytic core consists of 2 alpha, 1 beta, 1 beta' and 1 omega subunit. When a sigma factor is associated with the core the holoenzyme is formed, which can initiate transcription. The cofactor is Mg(2+). Zn(2+) is required as a cofactor.

It catalyses the reaction RNA(n) + a ribonucleoside 5'-triphosphate = RNA(n+1) + diphosphate. Its function is as follows. DNA-dependent RNA polymerase catalyzes the transcription of DNA into RNA using the four ribonucleoside triphosphates as substrates. In Clostridioides difficile (strain 630) (Peptoclostridium difficile), this protein is DNA-directed RNA polymerase subunit beta'.